Consider the following 217-residue polypeptide: Protein-L-isoaspartate O-methyltransferase 2 (217 aa).

Residue serine 62 is part of the active site.

The protein belongs to the methyltransferase superfamily. L-isoaspartyl/D-aspartyl protein methyltransferase family.

Its subcellular location is the cytoplasm. It catalyses the reaction [protein]-L-isoaspartate + S-adenosyl-L-methionine = [protein]-L-isoaspartate alpha-methyl ester + S-adenosyl-L-homocysteine. In terms of biological role, catalyzes the methyl esterification of L-isoaspartyl residues in peptides and proteins that result from spontaneous decomposition of normal L-aspartyl and L-asparaginyl residues. It plays a role in the repair and/or degradation of damaged proteins. The chain is Protein-L-isoaspartate O-methyltransferase 2 from Geotalea uraniireducens (strain Rf4) (Geobacter uraniireducens).